A 192-amino-acid polypeptide reads, in one-letter code: uncharacterized protein (192 aa).

Residues 29–160 (HRQAAVLIPI…PLDIYRRGDS (132 aa)) form the Nudix hydrolase domain. The Nudix box signature appears at 67-89 (GAVDDTDASVIAAALREAEEEVA). Positions 83 and 87 each coordinate Mg(2+).

This sequence belongs to the Nudix hydrolase family. PCD1 subfamily. Mn(2+) serves as cofactor. Requires Mg(2+) as cofactor.

Its function is as follows. Probably mediates the hydrolysis of some nucleoside diphosphate derivatives. This is an uncharacterized protein from Shigella sonnei (strain Ss046).